Reading from the N-terminus, the 357-residue chain is UDP-N-acetylglucosamine--N-acetylmuramyl-(pentapeptide) pyrophosphoryl-undecaprenol N-acetylglucosamine transferase (357 aa).

UDP-N-acetyl-alpha-D-glucosamine contacts are provided by residues 15–17 (TGG), N123, R164, S190, and Q284.

The protein belongs to the glycosyltransferase 28 family. MurG subfamily.

The protein localises to the cell inner membrane. The catalysed reaction is di-trans,octa-cis-undecaprenyl diphospho-N-acetyl-alpha-D-muramoyl-L-alanyl-D-glutamyl-meso-2,6-diaminopimeloyl-D-alanyl-D-alanine + UDP-N-acetyl-alpha-D-glucosamine = di-trans,octa-cis-undecaprenyl diphospho-[N-acetyl-alpha-D-glucosaminyl-(1-&gt;4)]-N-acetyl-alpha-D-muramoyl-L-alanyl-D-glutamyl-meso-2,6-diaminopimeloyl-D-alanyl-D-alanine + UDP + H(+). Its pathway is cell wall biogenesis; peptidoglycan biosynthesis. In terms of biological role, cell wall formation. Catalyzes the transfer of a GlcNAc subunit on undecaprenyl-pyrophosphoryl-MurNAc-pentapeptide (lipid intermediate I) to form undecaprenyl-pyrophosphoryl-MurNAc-(pentapeptide)GlcNAc (lipid intermediate II). In Synechococcus elongatus (strain ATCC 33912 / PCC 7942 / FACHB-805) (Anacystis nidulans R2), this protein is UDP-N-acetylglucosamine--N-acetylmuramyl-(pentapeptide) pyrophosphoryl-undecaprenol N-acetylglucosamine transferase.